Consider the following 141-residue polypeptide: Large ribosomal subunit protein uL11 (141 aa).

It belongs to the universal ribosomal protein uL11 family. In terms of assembly, part of the ribosomal stalk of the 50S ribosomal subunit. Interacts with L10 and the large rRNA to form the base of the stalk. L10 forms an elongated spine to which L12 dimers bind in a sequential fashion forming a multimeric L10(L12)X complex. One or more lysine residues are methylated.

Functionally, forms part of the ribosomal stalk which helps the ribosome interact with GTP-bound translation factors. In Phytoplasma australiense, this protein is Large ribosomal subunit protein uL11.